Consider the following 79-residue polypeptide: CDC42 small effector protein 1 (79 aa).

S-palmitoyl cysteine attachment occurs at residues Cys-10 and Cys-11. A CRIB domain is found at 30-43 (IGEPMNFVHLTHIG). Residues 48-79 (GAGDGLAMTGAVQEQMRSKGNRDRPWSNSRAL) form a disordered region. Basic and acidic residues predominate over residues 63–72 (MRSKGNRDRP).

It belongs to the CDC42SE/SPEC family. As to quaternary structure, interacts with CDC42 (in GTP-bound form). Interacts weakly with RAC1 and not at all with RHOA.

The protein localises to the cytoplasm. It localises to the cytoskeleton. The protein resides in the cell membrane. Functionally, probably involved in the organization of the actin cytoskeleton by acting downstream of CDC42, inducing actin filament assembly. Alters CDC42-induced cell shape changes. In activated T-cells, may play a role in CDC42-mediated F-actin accumulation at the immunological synapse. May play a role in early contractile events in phagocytosis in macrophages. The chain is CDC42 small effector protein 1 (Cdc42se1) from Rattus norvegicus (Rat).